A 900-amino-acid chain; its full sequence is Peroxisomal hydratase-dehydrogenase-epimerase (900 aa).

Short-chain dehydrogenase like stretches follow at residues 6 to 230 (SFKD…THES) and 319 to 535 (SLCN…ASEE). The NADP(+) site is built by I14, K53, N100, R133, Y165, and K169. Y165 serves as the catalytic Proton donor. K169 acts as the Lowers pKa of active site Tyr in catalysis. Positions 689, 690, 719, 803, 805, 826, 851, and 852 each coordinate (3R)-3-hydroxydecanoyl-CoA. The 113-residue stretch at 775–887 (EVPHGKVPDF…DTTRNVIVLD (113 aa)) folds into the MaoC-like domain. The Microbody targeting signal signature appears at 898–900 (SKL).

The protein belongs to the short-chain dehydrogenases/reductases (SDR) family. Monomer.

Its subcellular location is the peroxisome. The enzyme catalyses a (3R)-3-hydroxyacyl-CoA = a (2E)-enoyl-CoA + H2O. It catalyses the reaction a (3R)-3-hydroxyacyl-CoA + NAD(+) = a 3-oxoacyl-CoA + NADH + H(+). The protein operates within lipid metabolism; fatty acid beta-oxidation. Second trifunctional enzyme acting on the beta-oxidation pathway for fatty acids, possessing hydratase-dehydrogenase-epimerase activities. Converts trans-2-enoyl-CoA via D-3-hydroxyacyl-CoA to 3-ketoacyl-CoA. In Saccharomyces cerevisiae (strain ATCC 204508 / S288c) (Baker's yeast), this protein is Peroxisomal hydratase-dehydrogenase-epimerase (FOX2).